A 711-amino-acid chain; its full sequence is Forkhead box protein P1 (711 aa).

The span at 1–19 shows a compositional bias: polar residues; sequence MMQESGSEAKSNGSTIQNG. A disordered region spans residues 1–41; it reads MMQESGSEAKSNGSTIQNGSSGGNHLLECGTLRDTRSNGEA. Serine 115 bears the Phosphoserine mark. 2 disordered regions span residues 273 to 292 and 305 to 332; these read HTAE…TSTC and MNPH…EHPH. Over residues 305 to 317 the composition is skewed to polar residues; the sequence is MNPHASTNGQLSV. Over residues 320 to 332 the composition is skewed to basic and acidic residues; it reads PKRESLSHEEHPH. Lysine 321 participates in a covalent cross-link: Glycyl lysine isopeptide (Lys-Gly) (interchain with G-Cter in SUMO2). A C2H2-type zinc finger spans residues 340-365; it reads GVCKWPGCEAVCDDFPAFLKHLNSEH. A leucine-zipper region spans residues 382 to 403; sequence VQQLELQLAKDKERLQAMMTHL. Glycyl lysine isopeptide (Lys-Gly) (interchain with G-Cter in SUMO2) cross-links involve residues lysine 406 and lysine 411. The interval 416-420 is CTBP1-binding; it reads PLNLV. Over residues 424-437 the composition is skewed to polar residues; that stretch reads TLSKSASEASPQSL. A disordered region spans residues 424-456; it reads TLSKSASEASPQSLPHTPTTPTAPLTPVTQGPS. The segment covering 438-452 has biased composition (low complexity); it reads PHTPTTPTAPLTPVT. Residue lysine 476 forms a Glycyl lysine isopeptide (Lys-Gly) (interchain with G-Cter in SUMO2) linkage. A DNA-binding region (fork-head) is located at residues 499 to 589; it reads RPPFTYASLI…PQKISGNPSL (91 aa). A disordered region spans residues 645–711; it reads EHTNSNESDS…EDEPVNEDME (67 aa). Positions 646 to 657 are enriched in polar residues; that stretch reads HTNSNESDSSPG. Position 687 is a phosphothreonine (threonine 687). Serine 692 is modified (phosphoserine). The span at 701–711 shows a compositional bias: acidic residues; the sequence is YEDEPVNEDME.

As to quaternary structure, forms homodimers and heterodimers with FOXP2 and FOXP4. Dimerization is required for DNA-binding. Self-associates. Interacts with CTBP1. Interacts with NCOR2 and AR. Interacts with FOXP2. Interacts with TBR1. Interacts with AURKA; this interaction facilitates the phosphorylation of FOXP1, which suppresses the expression of FBXL7. Interacts with ZMYM2.

Its subcellular location is the nucleus. Transcriptional repressor. Can act with CTBP1 to synergistically repress transcription but CTPBP1 is not essential. Plays an important role in the specification and differentiation of lung epithelium. Acts cooperatively with FOXP4 to regulate lung secretory epithelial cell fate and regeneration by restricting the goblet cell lineage program; the function may involve regulation of AGR2. Essential transcriptional regulator of B-cell development. Involved in regulation of cardiac muscle cell proliferation. Involved in the columnar organization of spinal motor neurons. Promotes the formation of the lateral motor neuron column (LMC) and the preganglionic motor column (PGC) and is required for respective appropriate motor axon projections. The segment-appropriate generation of spinal cord motor columns requires cooperation with other Hox proteins. Can regulate PITX3 promoter activity; may promote midbrain identity in embryonic stem cell-derived dopamine neurons by regulating PITX3. Negatively regulates the differentiation of T follicular helper cells T(FH)s. Involved in maintenance of hair follicle stem cell quiescence; the function probably involves regulation of FGF18. Represses transcription of various pro-apoptotic genes and cooperates with NF-kappa B-signaling in promoting B-cell expansion by inhibition of caspase-dependent apoptosis. Binds to CSF1R promoter elements and is involved in regulation of monocyte differentiation and macrophage functions; repression of CSF1R in monocytes seems to involve NCOR2 as corepressor. Involved in endothelial cell proliferation, tube formation and migration indicative for a role in angiogenesis; the role in neovascularization seems to implicate suppression of SEMA5B. Can negatively regulate androgen receptor signaling. Acts as a transcriptional activator of the FBXL7 promoter; this activity is regulated by AURKA. The chain is Forkhead box protein P1 (Foxp1) from Rattus norvegicus (Rat).